The primary structure comprises 378 residues: Mevalonate kinase (378 aa).

ATP-binding positions include Lys10, Ser138, and 143 to 149; that span reads GSGLGSS. Mg(2+) is bound by residues Ser149 and Glu193. Asp204 serves as the catalytic Proton acceptor.

This sequence belongs to the GHMP kinase family. Mevalonate kinase subfamily. The cofactor is Mg(2+).

It is found in the cytoplasm. The enzyme catalyses (R)-mevalonate + ATP = (R)-5-phosphomevalonate + ADP + H(+). It participates in isoprenoid biosynthesis; isopentenyl diphosphate biosynthesis via mevalonate pathway; isopentenyl diphosphate from (R)-mevalonate: step 1/3. Its activity is regulated as follows. Its activity is inhibited in vitro by geranyl pyrophosphate (GPP) and farnesyl pyrophosphate (FPP) that bind competitively at the ATP-binding site on the enzyme. Catalyzes the phosphorylation of mevalonate to mevalonate 5-phosphate, a key step in isoprenoid and cholesterol biosynthesis. This is Mevalonate kinase from Arabidopsis thaliana (Mouse-ear cress).